Reading from the N-terminus, the 196-residue chain is MYEYFKGIISKITAKYIVLEVNSIGYILHVANPYAYSGHLHQEAKVYVHQVVREDAELLYGFATEEEKQLFLSLISVSGIGPVSALAIIAADDNAGLVQAIEQKNITYLTKFPKIGKKTAQQMVLDLEGKVVAADGLAESKAPVQTVDNQELEEAMEAMLALGYKATELKKIKKFFEGTTDTAENYIKSALKMLVK.

A domain I region spans residues 1–63 (MYEYFKGIIS…EDAELLYGFA (63 aa)). The interval 64–142 (TEEEKQLFLS…AADGLAESKA (79 aa)) is domain II. The interval 143-146 (PVQT) is flexible linker. The interval 147–196 (VDNQELEEAMEAMLALGYKATELKKIKKFFEGTTDTAENYIKSALKMLVK) is domain III.

This sequence belongs to the RuvA family. As to quaternary structure, homotetramer. Forms an RuvA(8)-RuvB(12)-Holliday junction (HJ) complex. HJ DNA is sandwiched between 2 RuvA tetramers; dsDNA enters through RuvA and exits via RuvB. An RuvB hexamer assembles on each DNA strand where it exits the tetramer. Each RuvB hexamer is contacted by two RuvA subunits (via domain III) on 2 adjacent RuvB subunits; this complex drives branch migration. In the full resolvosome a probable DNA-RuvA(4)-RuvB(12)-RuvC(2) complex forms which resolves the HJ.

The protein localises to the cytoplasm. Its function is as follows. The RuvA-RuvB-RuvC complex processes Holliday junction (HJ) DNA during genetic recombination and DNA repair, while the RuvA-RuvB complex plays an important role in the rescue of blocked DNA replication forks via replication fork reversal (RFR). RuvA specifically binds to HJ cruciform DNA, conferring on it an open structure. The RuvB hexamer acts as an ATP-dependent pump, pulling dsDNA into and through the RuvAB complex. HJ branch migration allows RuvC to scan DNA until it finds its consensus sequence, where it cleaves and resolves the cruciform DNA. The sequence is that of Holliday junction branch migration complex subunit RuvA from Streptococcus gordonii (strain Challis / ATCC 35105 / BCRC 15272 / CH1 / DL1 / V288).